A 323-amino-acid polypeptide reads, in one-letter code: uncharacterized protein (323 aa).

It belongs to the glycosyltransferase 2 family.

This is an uncharacterized protein from Haemophilus influenzae (strain ATCC 51907 / DSM 11121 / KW20 / Rd).